The sequence spans 314 residues: S-methyl-5'-thioadenosine phosphorylase (314 aa).

Residues Ser-31, 73–74 (RH), and 106–107 (SA) each bind phosphate. Met-207 contributes to the substrate binding site. Thr-208 provides a ligand contact to phosphate. 231–233 (DYD) contacts substrate.

The protein belongs to the PNP/MTAP phosphorylase family. MTAP subfamily. Homohexamer. Dimer of a homotrimer.

It carries out the reaction S-methyl-5'-thioadenosine + phosphate = 5-(methylsulfanyl)-alpha-D-ribose 1-phosphate + adenine. Its pathway is amino-acid biosynthesis; L-methionine biosynthesis via salvage pathway; S-methyl-5-thio-alpha-D-ribose 1-phosphate from S-methyl-5'-thioadenosine (phosphorylase route): step 1/1. Its function is as follows. Catalyzes the reversible phosphorylation of S-methyl-5'-thioadenosine (MTA) to adenine and 5-methylthioribose-1-phosphate. Involved in the breakdown of MTA, a major by-product of polyamine biosynthesis. Responsible for the first step in the methionine salvage pathway after MTA has been generated from S-adenosylmethionine. Has broad substrate specificity with 6-aminopurine nucleosides as preferred substrates. The sequence is that of S-methyl-5'-thioadenosine phosphorylase from Prochlorococcus marinus (strain SARG / CCMP1375 / SS120).